We begin with the raw amino-acid sequence, 95 residues long: Protein TusB (95 aa).

It belongs to the DsrH/TusB family. As to quaternary structure, heterohexamer, formed by a dimer of trimers. The hexameric TusBCD complex contains 2 copies each of TusB, TusC and TusD. The TusBCD complex interacts with TusE.

It localises to the cytoplasm. In terms of biological role, part of a sulfur-relay system required for 2-thiolation of 5-methylaminomethyl-2-thiouridine (mnm(5)s(2)U) at tRNA wobble positions. The sequence is that of Protein TusB from Escherichia coli O139:H28 (strain E24377A / ETEC).